The following is a 330-amino-acid chain: DNA-directed RNA polymerase subunit alpha (330 aa).

An alpha N-terminal domain (alpha-NTD) region spans residues 1–231 (MAILAFQKPD…IYHFMLFSDE (231 aa)). Positions 253–330 (MRQLLKTKLV…DISKYKLDKE (78 aa)) are alpha C-terminal domain (alpha-CTD).

The protein belongs to the RNA polymerase alpha chain family. As to quaternary structure, homodimer. The RNAP catalytic core consists of 2 alpha, 1 beta, 1 beta' and 1 omega subunit. When a sigma factor is associated with the core the holoenzyme is formed, which can initiate transcription.

It carries out the reaction RNA(n) + a ribonucleoside 5'-triphosphate = RNA(n+1) + diphosphate. DNA-dependent RNA polymerase catalyzes the transcription of DNA into RNA using the four ribonucleoside triphosphates as substrates. The chain is DNA-directed RNA polymerase subunit alpha from Phocaeicola vulgatus (strain ATCC 8482 / DSM 1447 / JCM 5826 / CCUG 4940 / NBRC 14291 / NCTC 11154) (Bacteroides vulgatus).